We begin with the raw amino-acid sequence, 239 residues long: Large ribosomal subunit protein uL2 (239 aa).

The tract at residues 200-239 (VNHPHGGKEHHIGRPSTVSRRAPPGRKVGHIAARRTGRRK) is disordered. Residues 222 to 239 (PPGRKVGHIAARRTGRRK) show a composition bias toward basic residues.

It belongs to the universal ribosomal protein uL2 family. In terms of assembly, part of the 50S ribosomal subunit. Forms a bridge to the 30S subunit in the 70S ribosome.

In terms of biological role, one of the primary rRNA binding proteins. Required for association of the 30S and 50S subunits to form the 70S ribosome, for tRNA binding and peptide bond formation. It has been suggested to have peptidyltransferase activity; this is somewhat controversial. Makes several contacts with the 16S rRNA in the 70S ribosome. The chain is Large ribosomal subunit protein uL2 from Thermococcus onnurineus (strain NA1).